The sequence spans 49 residues: uncharacterized protein (49 aa).

An N-terminal signal peptide occupies residues 1–22; the sequence is MVFLLFLSFVLSSIFLVPLVYM.

The protein resides in the secreted. This is an uncharacterized protein from Dictyostelium discoideum (Social amoeba).